Consider the following 471-residue polypeptide: Tyrosine--tRNA ligase (471 aa).

Position 41 (Tyr-41) interacts with L-tyrosine. Positions 46 to 55 (PTAPSLHVGN) match the 'HIGH' region motif. L-tyrosine-binding residues include Tyr-176 and Gln-180. The 'KMSKS' region signature appears at 236–240 (KFGKT). Lys-239 is an ATP binding site. Residues 403 to 471 (DLITHILQKV…GKKHLAAVFY (69 aa)) form the S4 RNA-binding domain.

The protein belongs to the class-I aminoacyl-tRNA synthetase family. TyrS type 1 subfamily. Homodimer.

Its subcellular location is the cytoplasm. It carries out the reaction tRNA(Tyr) + L-tyrosine + ATP = L-tyrosyl-tRNA(Tyr) + AMP + diphosphate + H(+). Functionally, catalyzes the attachment of tyrosine to tRNA(Tyr) in a two-step reaction: tyrosine is first activated by ATP to form Tyr-AMP and then transferred to the acceptor end of tRNA(Tyr). The protein is Tyrosine--tRNA ligase of Tropheryma whipplei (strain Twist) (Whipple's bacillus).